A 553-amino-acid chain; its full sequence is Ubiquitin carboxyl-terminal hydrolase 17-like protein 15 (553 aa).

Residues 80-375 enclose the USP domain; sequence AGLQNMGNTC…QAYVLFYIQK (296 aa). Catalysis depends on C89, which acts as the Nucleophile. The active-site Proton acceptor is the H334. Composition is skewed to basic and acidic residues over residues 382-392 and 398-413; these read SESVSRGREPR and DTDR…RDHP. Disordered stretches follow at residues 382-413 and 491-524; these read SESV…RDHP and STTP…HSKR. Positions 496 to 505 are enriched in polar residues; it reads HQESMNTGTL. A compositionally biased stretch (basic residues) spans 510–524; it reads GRARRSKGKNKHSKR.

This sequence belongs to the peptidase C19 family. USP17 subfamily.

Its subcellular location is the nucleus. It localises to the endoplasmic reticulum. It carries out the reaction Thiol-dependent hydrolysis of ester, thioester, amide, peptide and isopeptide bonds formed by the C-terminal Gly of ubiquitin (a 76-residue protein attached to proteins as an intracellular targeting signal).. Its function is as follows. Deubiquitinating enzyme that removes conjugated ubiquitin from specific proteins to regulate different cellular processes that may include cell proliferation, progression through the cell cycle, apoptosis, cell migration, and the cellular response to viral infection. The sequence is that of Ubiquitin carboxyl-terminal hydrolase 17-like protein 15 (USP17L15) from Homo sapiens (Human).